Reading from the N-terminus, the 215-residue chain is Adenylate kinase (215 aa).

10-15 (GAGKGT) provides a ligand contact to ATP. Residues 30–59 (STGDILRANVREGTELGLAAKAYMDKGELV) are NMP. Residues Thr31, Arg36, 57–59 (ELV), 85–88 (GYPR), and Gln92 each bind AMP. Residues 126 to 162 (GRLMCKCGASYHIISNPPKKDNVCDICGGEVFQRADD) form an LID region. Arg127 contributes to the ATP binding site. The Zn(2+) site is built by Cys130 and Cys132. Residue 135–136 (SY) coordinates ATP. Zn(2+) contacts are provided by Cys149 and Cys152. Arg159 and Arg170 together coordinate AMP. Lys198 serves as a coordination point for ATP.

This sequence belongs to the adenylate kinase family. As to quaternary structure, monomer.

It localises to the cytoplasm. It catalyses the reaction AMP + ATP = 2 ADP. It participates in purine metabolism; AMP biosynthesis via salvage pathway; AMP from ADP: step 1/1. In terms of biological role, catalyzes the reversible transfer of the terminal phosphate group between ATP and AMP. Plays an important role in cellular energy homeostasis and in adenine nucleotide metabolism. In Methanosarcina acetivorans (strain ATCC 35395 / DSM 2834 / JCM 12185 / C2A), this protein is Adenylate kinase.